A 207-amino-acid chain; its full sequence is Large ribosomal subunit protein uL4 (207 aa).

Residues 49–78 (HAVKNRSAVSGGGRKPWRQKGTGRARQGSI) form a disordered region.

The protein belongs to the universal ribosomal protein uL4 family. Part of the 50S ribosomal subunit.

In terms of biological role, one of the primary rRNA binding proteins, this protein initially binds near the 5'-end of the 23S rRNA. It is important during the early stages of 50S assembly. It makes multiple contacts with different domains of the 23S rRNA in the assembled 50S subunit and ribosome. Forms part of the polypeptide exit tunnel. This is Large ribosomal subunit protein uL4 from Streptococcus equi subsp. zooepidemicus (strain H70).